The following is a 457-amino-acid chain: Bifunctional protein GlmU (457 aa).

Residues 1-230 are pyrophosphorylase; sequence MPLSLPLHIV…AREVEGVNDL (230 aa). UDP-N-acetyl-alpha-D-glucosamine-binding positions include 12–15, Lys26, Gln78, 83–84, 105–107, Gly140, Glu155, Asn170, and Asn228; these read LAAG, GT, and YGD. Asp107 lines the Mg(2+) pocket. Residue Asn228 participates in Mg(2+) binding. Residues 231 to 251 form a linker region; sequence WQLTQLERAWQIRAARALCLQ. Positions 252-457 are N-acetyltransferase; that stretch reads GARVADPARL…DSWQRPKKKT (206 aa). UDP-N-acetyl-alpha-D-glucosamine contacts are provided by Arg334 and Lys352. The Proton acceptor role is filled by His364. Tyr367 and Asn378 together coordinate UDP-N-acetyl-alpha-D-glucosamine. Residues Ala381, 387-388, Ser406, Ala424, and Arg441 each bind acetyl-CoA; that span reads NY.

It in the N-terminal section; belongs to the N-acetylglucosamine-1-phosphate uridyltransferase family. This sequence in the C-terminal section; belongs to the transferase hexapeptide repeat family. In terms of assembly, homotrimer. The cofactor is Mg(2+).

It localises to the cytoplasm. The catalysed reaction is alpha-D-glucosamine 1-phosphate + acetyl-CoA = N-acetyl-alpha-D-glucosamine 1-phosphate + CoA + H(+). The enzyme catalyses N-acetyl-alpha-D-glucosamine 1-phosphate + UTP + H(+) = UDP-N-acetyl-alpha-D-glucosamine + diphosphate. The protein operates within nucleotide-sugar biosynthesis; UDP-N-acetyl-alpha-D-glucosamine biosynthesis; N-acetyl-alpha-D-glucosamine 1-phosphate from alpha-D-glucosamine 6-phosphate (route II): step 2/2. It functions in the pathway nucleotide-sugar biosynthesis; UDP-N-acetyl-alpha-D-glucosamine biosynthesis; UDP-N-acetyl-alpha-D-glucosamine from N-acetyl-alpha-D-glucosamine 1-phosphate: step 1/1. It participates in bacterial outer membrane biogenesis; LPS lipid A biosynthesis. Catalyzes the last two sequential reactions in the de novo biosynthetic pathway for UDP-N-acetylglucosamine (UDP-GlcNAc). The C-terminal domain catalyzes the transfer of acetyl group from acetyl coenzyme A to glucosamine-1-phosphate (GlcN-1-P) to produce N-acetylglucosamine-1-phosphate (GlcNAc-1-P), which is converted into UDP-GlcNAc by the transfer of uridine 5-monophosphate (from uridine 5-triphosphate), a reaction catalyzed by the N-terminal domain. This Xylella fastidiosa (strain 9a5c) protein is Bifunctional protein GlmU.